Consider the following 106-residue polypeptide: Iron-sulfur cluster assembly protein CyaY (106 aa).

This sequence belongs to the frataxin family.

Its function is as follows. Involved in iron-sulfur (Fe-S) cluster assembly. May act as a regulator of Fe-S biogenesis. This Salmonella dublin (strain CT_02021853) protein is Iron-sulfur cluster assembly protein CyaY.